A 420-amino-acid polypeptide reads, in one-letter code: Trichothecene biosynthesis transcription regulator TRI10 (420 aa).

This sequence belongs to the TRI10 transcription regulator family.

The protein resides in the nucleus. Its function is as follows. Transcriptional activator of all of the trichothecene biosynthesis genes. Acts upstream of the cluster-encoded transcription factor TRI6 and is necessary for full expression of both the other trichothecene genes and the genes for the primary metabolic pathway that precedes the trichothecene biosynthetic pathway. The polypeptide is Trichothecene biosynthesis transcription regulator TRI10 (Fusarium sporotrichioides).